Here is a 1907-residue protein sequence, read N- to C-terminus: Receptor-type tyrosine-protein phosphatase S (1907 aa).

Positions 1-29 are cleaved as a signal peptide; it reads MAPTWSPSVVSVVGPVGLFLVLLARGCLA. At 30–1257 the chain is on the extracellular side; that stretch reads EEPPRFIREP…PQPIVDGEEG (1228 aa). Ig-like C2-type domains lie at 33 to 123, 135 to 224, and 232 to 314; these read PRFI…AKLT, PNID…ANLY, and PRFS…AQIT. Intrachain disulfides connect C54–C107 and C156–C207. The interval 68–72 is important for binding to glycosaminoglycan chains; it reads KKGKK. N250 and N295 each carry an N-linked (GlcNAc...) asparagine glycan. C253 and C298 are oxidised to a cystine. 8 Fibronectin type-III domains span residues 321 to 411, 416 to 510, 514 to 603, 608 to 705, 710 to 809, 810 to 906, 907 to 1008, and 1011 to 1095; these read APGT…TGEQ, APRN…TQQG, QPMN…TLQA, PPQD…TDED, PPRK…TKGA, VLGR…APRG, FPQI…LARD, and SPKN…TAFN. Positions 691–700 are enriched in low complexity; it reads PGPESSPVVV. Residues 691-711 form a disordered region; that stretch reads PGPESSPVVVRTDEDVPSAPP. The N-linked (GlcNAc...) asparagine glycan is linked to N720. N916 carries an N-linked (GlcNAc...) asparagine glycan. The chain crosses the membrane as a helical span at residues 1258–1278; it reads LIWVIGPVLAVVFIICIVIAI. The Cytoplasmic segment spans residues 1279-1907; sequence LLYKNKPDSK…YLGSFDHYAT (629 aa). Residues 1286-1296 show a composition bias toward basic and acidic residues; the sequence is DSKRKDSEPRT. Positions 1286 to 1313 are disordered; that stretch reads DSKRKDSEPRTKCLLNNADLAPHHPKDP. 2 Tyrosine-protein phosphatase domains span residues 1352-1607 and 1639-1898; these read LSQE…LLEA and MELE…ALEY. Residues D1516, 1548-1554, and Q1592 contribute to the substrate site; that span reads CSAGVGR. C1548 functions as the Phosphocysteine intermediate in the catalytic mechanism. Residue C1839 is the Phosphocysteine intermediate of the active site.

This sequence belongs to the protein-tyrosine phosphatase family. Receptor class 2A subfamily. In terms of assembly, binding to large heparan sulfate proteoglycan structures promotes oligomerization. Binding to chondroitin sulfate proteoglycan does not lead to oligomerization. Interacts (via Ig-like domains) with NTRK3. Interacts (via Ig-like domains) with NTRK1, but does not form detectable complexes with NTRK2. Interacts with PPFIA1, PPFIA2 and PPFIA3. A cleavage occurs, separating the extracellular domain from the transmembrane segment. This process called 'ectodomain shedding' is thought to be involved in receptor desensitization, signal transduction and/or membrane localization. Detected in brain cortex, cerebellum and thoracic spinal cord (at protein level). Detected in motor cortex and white matter of the spinal cord, but not in spinal cord gray matter. Isoform 1 and isoform 6 are predominantly expressed in the brain (cerebrum and cerebellum) and to a lesser extent in the heart and skeletal muscle. Also found in neuronal-derived cell lines. Detected in the ganglion cell layer of the retina and in glial cells along the optic nerve. Detected in bone marrow and spleen plasmacytoid dendritic cells.

It is found in the cell membrane. The protein resides in the cell projection. Its subcellular location is the axon. The protein localises to the perikaryon. It localises to the cytoplasmic vesicle. It is found in the secretory vesicle. The protein resides in the synaptic vesicle membrane. Its subcellular location is the synapse. The protein localises to the synaptosome. It localises to the postsynaptic density. It is found in the neuron projection. The protein resides in the growth cone. It catalyses the reaction O-phospho-L-tyrosyl-[protein] + H2O = L-tyrosyl-[protein] + phosphate. Functionally, cell surface receptor that binds to glycosaminoglycans, including chondroitin sulfate proteoglycans and heparan sulfate proteoglycans. Binding to chondroitin sulfate and heparan sulfate proteoglycans has opposite effects on PTPRS oligomerization and regulation of neurite outgrowth. Contributes to the inhibition of neurite and axonal outgrowth by chondroitin sulfate proteoglycans, also after nerve transection. Plays a role in stimulating neurite outgrowth in response to the heparan sulfate proteoglycan GPC2. Required for normal brain development, especially for normal development of the pituitary gland and the olfactory bulb. Functions as a tyrosine phosphatase. Mediates dephosphorylation of NTRK1, NTRK2 and NTRK3. Plays a role in down-regulation of signaling cascades that lead to the activation of Akt and MAP kinases. Down-regulates TLR9-mediated activation of NF-kappa-B, as well as production of TNF, interferon alpha and interferon beta. The chain is Receptor-type tyrosine-protein phosphatase S (Ptprs) from Mus musculus (Mouse).